A 1296-amino-acid polypeptide reads, in one-letter code: Phosphoribosylformylglycinamidine synthase (1296 aa).

The segment at W304–R323 is disordered. Residues G306–D317 and A677 contribute to the ATP site. D678, E717, N721, and D885 together coordinate Mg(2+). S887 is a binding site for ATP. Basic and acidic residues predominate over residues P1000–E1013. Residues P1000–N1019 form a disordered region. Residues V1043–G1296 form the Glutamine amidotransferase type-1 domain. Catalysis depends on C1136, which acts as the Nucleophile. Residues H1261 and E1263 contribute to the active site.

It in the N-terminal section; belongs to the FGAMS family. Monomer.

The protein resides in the cytoplasm. The enzyme catalyses N(2)-formyl-N(1)-(5-phospho-beta-D-ribosyl)glycinamide + L-glutamine + ATP + H2O = 2-formamido-N(1)-(5-O-phospho-beta-D-ribosyl)acetamidine + L-glutamate + ADP + phosphate + H(+). Its pathway is purine metabolism; IMP biosynthesis via de novo pathway; 5-amino-1-(5-phospho-D-ribosyl)imidazole from N(2)-formyl-N(1)-(5-phospho-D-ribosyl)glycinamide: step 1/2. Its function is as follows. Phosphoribosylformylglycinamidine synthase involved in the purines biosynthetic pathway. Catalyzes the ATP-dependent conversion of formylglycinamide ribonucleotide (FGAR) and glutamine to yield formylglycinamidine ribonucleotide (FGAM) and glutamate. This chain is Phosphoribosylformylglycinamidine synthase, found in Yersinia pestis bv. Antiqua (strain Antiqua).